Consider the following 572-residue polypeptide: 2-hydroxyacyl-CoA lyase (572 aa).

Position 2 is an N-acetylalanine (Ala2). Residue Glu58 participates in thiamine diphosphate binding. The segment at 407–488 (TMDVGRSVLV…IIVFNNGGVY (82 aa)) is thiamine pyrophosphate binding. Positions 457 and 484 each coordinate Mg(2+).

It belongs to the TPP enzyme family. In terms of assembly, homotetramer. The cofactor is Mg(2+). Thiamine diphosphate serves as cofactor.

It carries out the reaction an (R)-2-hydroxy-long-chain-fatty acyl-CoA = a long-chain fatty aldehyde + formyl-CoA. The enzyme catalyses a 2-hydroxy-3-methyl fatty acyl-CoA = a 2-methyl-branched fatty aldehyde + formyl-CoA. Catalyzes a carbon-carbon cleavage reaction; cleaves a 2-hydroxy-3-methylacyl-CoA into formyl-CoA and a 2-methyl-branched fatty aldehyde. This is 2-hydroxyacyl-CoA lyase (HACL) from Arabidopsis thaliana (Mouse-ear cress).